A 211-amino-acid chain; its full sequence is 2,3-bisphosphoglycerate-dependent phosphoglycerate mutase (211 aa).

Substrate is bound by residues 9 to 16, 22 to 23, Arg-61, 88 to 91, Lys-99, 115 to 116, and 159 to 160; these read RHGQSDWN, TG, ERDY, RR, and GN. His-10 acts as the Tele-phosphohistidine intermediate in catalysis. The active-site Proton donor/acceptor is the Glu-88.

This sequence belongs to the phosphoglycerate mutase family. BPG-dependent PGAM subfamily. Homodimer.

It carries out the reaction (2R)-2-phosphoglycerate = (2R)-3-phosphoglycerate. The protein operates within carbohydrate degradation; glycolysis; pyruvate from D-glyceraldehyde 3-phosphate: step 3/5. Catalyzes the interconversion of 2-phosphoglycerate and 3-phosphoglycerate. This Rhizobium etli (strain CIAT 652) protein is 2,3-bisphosphoglycerate-dependent phosphoglycerate mutase.